The primary structure comprises 82 residues: Ubiquinol-cytochrome-c reductase complex assembly factor 3 (82 aa).

Over 1-6 (METVRR) the chain is Mitochondrial matrix. A helical transmembrane segment spans residues 7–29 (IVKGTLLLGFCTGIGGDLWVLVA). The Mitochondrial intermembrane portion of the chain corresponds to 30 to 82 (PGQERRLEMRMNYPEANPPMLAEAHKRNEMVLKVIEESAKTNENMARRSPWSS).

This sequence belongs to the UQCC3 family. As to quaternary structure, associates with the ubiquinol-cytochrome c reductase complex (mitochondrial respiratory chain complex III or cytochrome b-c1 complex).

The protein resides in the mitochondrion inner membrane. Functionally, required for the assembly of the ubiquinol-cytochrome c reductase complex (mitochondrial respiratory chain complex III or cytochrome b-c1 complex), mediating cytochrome b recruitment and probably stabilization within the complex. Thereby, plays an important role in ATP production by mitochondria. Cardiolipin-binding protein, it may also control the cardiolipin composition of mitochondria membranes and their morphology. This Xenopus laevis (African clawed frog) protein is Ubiquinol-cytochrome-c reductase complex assembly factor 3.